The sequence spans 216 residues: Transmembrane protein 125 (216 aa).

A run of 4 helical transmembrane segments spans residues 32–52 (LLCF…GVAL), 65–85 (LAVG…QLMS), 111–131 (AVVV…LAGL), and 144–164 (MLSV…GLLL).

The protein localises to the membrane. The protein is Transmembrane protein 125 (Tmem125) of Mus musculus (Mouse).